A 224-amino-acid polypeptide reads, in one-letter code: Deoxyribose-phosphate aldolase (224 aa).

The active-site Proton donor/acceptor is aspartate 91. The active-site Schiff-base intermediate with acetaldehyde is lysine 152. Catalysis depends on lysine 181, which acts as the Proton donor/acceptor.

The protein belongs to the DeoC/FbaB aldolase family. DeoC type 1 subfamily.

Its subcellular location is the cytoplasm. It catalyses the reaction 2-deoxy-D-ribose 5-phosphate = D-glyceraldehyde 3-phosphate + acetaldehyde. The protein operates within carbohydrate degradation; 2-deoxy-D-ribose 1-phosphate degradation; D-glyceraldehyde 3-phosphate and acetaldehyde from 2-deoxy-alpha-D-ribose 1-phosphate: step 2/2. Catalyzes a reversible aldol reaction between acetaldehyde and D-glyceraldehyde 3-phosphate to generate 2-deoxy-D-ribose 5-phosphate. In Mycoplasma pneumoniae (strain ATCC 29342 / M129 / Subtype 1) (Mycoplasmoides pneumoniae), this protein is Deoxyribose-phosphate aldolase.